A 97-amino-acid chain; its full sequence is Sorbitol dehydrogenase (97 aa).

A Zn(2+)-binding site is contributed by Cys-44. Tyr-50 lines the substrate pocket. Residues His-69 and Glu-70 each contribute to the Zn(2+) site.

It belongs to the zinc-containing alcohol dehydrogenase family. As to quaternary structure, homotetramer. Zn(2+) serves as cofactor.

The protein localises to the mitochondrion membrane. It is found in the cell projection. Its subcellular location is the cilium. It localises to the flagellum. It carries out the reaction xylitol + NAD(+) = D-xylulose + NADH + H(+). The enzyme catalyses L-iditol + NAD(+) = keto-L-sorbose + NADH + H(+). The catalysed reaction is keto-D-fructose + NADH + H(+) = D-sorbitol + NAD(+). In terms of biological role, polyol dehydrogenase that catalyzes the reversible NAD(+)-dependent oxidation of various sugar alcohols. Is active with xylitol, L-iditol and D-sorbitol (D-glucitol) as substrates, leading to the C2-oxidized products D-xylulose, L-sorbose and D-fructose, respectively. Is a key enzyme in the polyol pathway that interconverts glucose and fructose via sorbitol, which constitutes an important alternate route for glucose metabolism. May play a role in sperm motility by using sorbitol as an alternative energy source for sperm motility. The chain is Sorbitol dehydrogenase (SORD) from Sus scrofa (Pig).